The sequence spans 420 residues: Vacuolar amino acid transporter 5 (420 aa).

Topologically, residues 1–19 (MSGYSPLSSGPADVHIGKA) are cytoplasmic. A helical transmembrane segment spans residues 20 to 40 (GFFSSVINLANTILGAGILSL). Topologically, residues 41–49 (PNAFTKTGL) are vacuolar. A helical transmembrane segment spans residues 50 to 70 (LFGCLTIVFSAFASFLGLYFV). Topologically, residues 71–96 (SQCAARLPRGKASFAAVAKHTFPSLA) are cytoplasmic. Residues 97 to 117 (VVFDASIAVKCFGVAVSYLVI) traverse the membrane as a helical segment. Over 118 to 141 (VGDLMPQIAPSLGLSSPMFLRRQT) the chain is Vacuolar. The chain crosses the membrane as a helical span at residues 142 to 162 (WIVFALFVLTPLSFLKRLDSL). Residues 163 to 166 (RHTS) are Cytoplasmic-facing. A helical transmembrane segment spans residues 167–187 (VISLIALCYLVFIVLYHFIIG). Residues 188 to 195 (DTVKGEIR) lie on the Vacuolar side of the membrane. A helical membrane pass occupies residues 196–216 (YFVPESGFGYLSVLPVFVFGF). Topologically, residues 217–240 (TCHQNAFSVINEVRNFSQGFVNFT) are cytoplasmic. Residues 241–261 (MFTAIISSTLLYLLVAITGYL) traverse the membrane as a helical segment. The Vacuolar segment spans residues 262-278 (SFGSLASGNIIAMYDNT). A helical membrane pass occupies residues 279-299 (SIWIIGGKLAIVVLVLFSYPL). Residues 300–326 (QCHPCRNSVYQAIRRSYSAHDMSDGYH) lie on the Cytoplasmic side of the membrane. The helical transmembrane segment at 327 to 347 (AVITLCILLFTHSLALLLSSL) threads the bilayer. At 348–349 (EM) the chain is on the vacuolar side. The helical transmembrane segment at 350–370 (VLAFVGSTGSTFISFILPGSL) threads the bilayer. The Cytoplasmic portion of the chain corresponds to 371 to 394 (YYFFSHKVASPGNSSPLQLRISRA). Residues 395–415 (FAAGLAIYGTVVMILCLNINI) form a helical membrane-spanning segment. Over 416-420 (AKLSH) the chain is Vacuolar.

It belongs to the amino acid/polyamine transporter 2 family.

The protein localises to the vacuole membrane. Vacuolar amino acid transporter involved in the vacuolar uptake of histidine, glutamate, tyrosine, arginine, lysine, and serine. Required for sporulation. The protein is Vacuolar amino acid transporter 5 (avt5) of Schizosaccharomyces pombe (strain 972 / ATCC 24843) (Fission yeast).